The following is a 308-amino-acid chain: Low density lipoprotein receptor adapter protein 1 (308 aa).

N-acetylmethionine is present on Met-1. A Phosphoserine modification is found at Ser-14. Residues 41-195 (LLEGMVFSLK…QEGGDVPGTR (155 aa)) form the PID domain. Residues 179–201 (EKREKANQEGGDVPGTRRDSTPS) form a disordered region. Ser-198 and Ser-201 each carry phosphoserine. The short motif at 211 to 215 (LLDLE) is the Clathrin box element. The segment at 248-275 (WELDDGLDEAFSRLAQSRTNPQVLDTGL) is AP-2 complex binding. Positions 256–265 (EAFSRLAQSR) match the [DE]-X(1,2)-F-X-X-[FL]-X-X-X-R motif motif. Residues 288-308 (PTDWDKPDSSGIDQDDDVFTF) form a disordered region.

In terms of assembly, interacts (via PID domain) with LDLR (via NPXY motif). Binds to soluble clathrin trimers. Interacts with AP2B1; the interaction mediates the association with the AP-2 complex. Interacts with VLDLR. Interacts with LRP2.

The protein resides in the cytoplasm. In terms of biological role, adapter protein (clathrin-associated sorting protein (CLASP)) required for efficient endocytosis of the LDL receptor (LDLR) in polarized cells such as hepatocytes and lymphocytes, but not in non-polarized cells (fibroblasts). May be required for LDL binding and internalization but not for receptor clustering in coated pits. May facilitate the endocytosis of LDLR and LDLR-LDL complexes from coated pits by stabilizing the interaction between the receptor and the structural components of the pits. May also be involved in the internalization of other LDLR family members. Binds to phosphoinositides, which regulate clathrin bud assembly at the cell surface. Required for trafficking of LRP2 to the endocytic recycling compartment which is necessary for LRP2 proteolysis, releasing a tail fragment which translocates to the nucleus and mediates transcriptional repression. This Mus musculus (Mouse) protein is Low density lipoprotein receptor adapter protein 1.